The sequence spans 457 residues: Glycoprotein endo-alpha-1,2-mannosidase-like protein (457 aa).

Residues Met1 to Ala8 are Cytoplasmic-facing. A helical; Signal-anchor for type II membrane protein transmembrane segment spans residues Cys9–Leu29. Residues Lys30–Met457 lie on the Lumenal side of the membrane. The segment at Pro46 to Pro93 is disordered. Low complexity predominate over residues Gly53–Ala64. A compositionally biased stretch (pro residues) spans Pro65–Ala87.

It belongs to the glycosyl hydrolase 99 family.

Its subcellular location is the golgi apparatus membrane. In Homo sapiens (Human), this protein is Glycoprotein endo-alpha-1,2-mannosidase-like protein (MANEAL).